Consider the following 157-residue polypeptide: Arginine repressor (157 aa).

It belongs to the ArgR family.

It localises to the cytoplasm. It functions in the pathway amino-acid biosynthesis; L-arginine biosynthesis [regulation]. Functionally, regulates arginine biosynthesis genes. This chain is Arginine repressor, found in Lactobacillus delbrueckii subsp. bulgaricus (strain ATCC 11842 / DSM 20081 / BCRC 10696 / JCM 1002 / NBRC 13953 / NCIMB 11778 / NCTC 12712 / WDCM 00102 / Lb 14).